Reading from the N-terminus, the 325-residue chain is MDSQSSILEENLEKILRGEGLEFDSVAEQVDPVTLRKNVCYIVGAVIFNSKEEVLMVQEAKRECYGRWYLPAGRMEECESILEALQREVREEAGIDCQPITLLLVQEQGPRWVRFIFLAEETGGSLKTTAEADDESLQAHWWDRKSPLPLRAHDILSLIDAGLKYRRNPWFPVTQPVDFPCHVVCQRLFLTFISSRADADDRLWLLMSNNNTSHHPRLPIVVSFRTYISKAVSKLIEDCMPSSYISVHIRGILGVQHNGRIPGKTDGICFNTLVLLENTEEGAEIGSPPSLETDCYRWQEVTNQGLKAKIIERIKDGSVLPFQSL.

The Nudix hydrolase domain maps to 38–163 (NVCYIVGAVI…DILSLIDAGL (126 aa)). Leu55 serves as a coordination point for Mg(2+). The Nudix box signature appears at 73–94 (GRMEECESILEALQREVREEAG).

This sequence belongs to the Nudix hydrolase family. Requires Mn(2+) as cofactor. The cofactor is Mg(2+).

The catalysed reaction is 8-oxo-dGDP + H2O = 8-oxo-dGMP + phosphate + H(+). It carries out the reaction 8-oxo-dADP + H2O = 8-oxo-dAMP + phosphate + H(+). It catalyses the reaction 2-oxo-dADP + H2O = 2-oxo-dAMP + phosphate + H(+). The enzyme catalyses 8-oxo-GDP + H2O = 8-oxo-GMP + phosphate + H(+). Functionally, mediates the hydrolysis of oxidized nucleoside diphosphate derivatives. Hydrolyzes 8-oxo-7,8-dihydroguanine (8-oxo-Gua)-containing deoxyribo- and ribonucleoside diphosphates to the monophosphates. Hydrolyzes 8-oxo-dGDP and 8-oxo-GDP with the same efficiencies. Also hydrolyzes 8-OH-dADP and 2-OH-dADP. Exhibited no or minimal hydrolysis activity against 8-oxo-dGTP, 8-oxo-GTP, dGTP, GTP, dGDP and GDP. Probably removes oxidized guanine nucleotides from both the DNA and RNA precursor pools. This Danio rerio (Zebrafish) protein is 8-oxo-dGDP phosphatase NUDT18 (nudt18).